The chain runs to 423 residues: Gamma-glutamyl phosphate reductase (423 aa).

It belongs to the gamma-glutamyl phosphate reductase family.

It is found in the cytoplasm. It carries out the reaction L-glutamate 5-semialdehyde + phosphate + NADP(+) = L-glutamyl 5-phosphate + NADPH + H(+). The protein operates within amino-acid biosynthesis; L-proline biosynthesis; L-glutamate 5-semialdehyde from L-glutamate: step 2/2. Its function is as follows. Catalyzes the NADPH-dependent reduction of L-glutamate 5-phosphate into L-glutamate 5-semialdehyde and phosphate. The product spontaneously undergoes cyclization to form 1-pyrroline-5-carboxylate. The polypeptide is Gamma-glutamyl phosphate reductase (Pseudomonas fluorescens (strain Pf0-1)).